The sequence spans 547 residues: Membrane transporter D1 (547 aa).

Residues 1-2 (MR) lie on the Cytoplasmic side of the membrane. A helical membrane pass occupies residues 3–25 (ASVMLCAALGGFLFGYDTGVINA). Residues 26–43 (ALFQMKDHFGFSEHSWQY) lie on the Extracellular side of the membrane. Residues 44–64 (ALIVAIAIAGAFVGAFISGFI) form a helical membrane-spanning segment. Residues 65–78 (SAAFGRRPCIAVAD) are Cytoplasmic-facing. Residues 79-99 (ALFVIGSVLMGAAPNVEVVLV) form a helical membrane-spanning segment. Residues 100–101 (SR) are Extracellular-facing. Residues 102–122 (VIVGLAIGISSATIPVYLAEV) traverse the membrane as a helical segment. The Cytoplasmic portion of the chain corresponds to 123–136 (TSPKHRGATIVLNN). The chain crosses the membrane as a helical span at residues 137–157 (LFLTGGQFVAAGFTAIMVVFT). Topologically, residues 158–164 (SKNIGWR) are extracellular. The chain crosses the membrane as a helical span at residues 165-185 (VAIGIGALPAVVQAFCLLFFL). Residues 186 to 245 (PESPRWLLSKGHADRAKAVADKFEVDLCEFQEGDELPSVRIDYRPLMARDMRFRVVLSSG) lie on the Cytoplasmic side of the membrane. Residues 246–266 (LQIIQQFSGINTIMYYSSVIL) traverse the membrane as a helical segment. Topologically, residues 267–276 (YDAGFRDAIM) are extracellular. The chain crosses the membrane as a helical span at residues 277-297 (PVVLSIPLAFMNALFTAVAIF). The Cytoplasmic portion of the chain corresponds to 298 to 308 (TVDRFGRRRML). Residues 309-329 (LISVFGCLVLLVVIAIIGFFI) form a helical membrane-spanning segment. At 330–339 (GTRISYSVGG) the chain is on the extracellular side. Residues 340–360 (GLFLALLAVFLALYAPGIGCI) traverse the membrane as a helical segment. Topologically, residues 361–385 (PWVIMGEIFPTHLRTSAASVATMAN) are cytoplasmic. The helical transmembrane segment at 386 to 406 (WGANVLVSQVFPILMGAIGVG) threads the bilayer. Position 407 (Gly407) is a topological domain, extracellular. A helical membrane pass occupies residues 408–428 (TFTIISGLMALGCIFVYFFAV). Residues 429 to 547 (ETKGLTLEQI…AIKAAPHEPK (119 aa)) lie on the Cytoplasmic side of the membrane. 2 disordered regions span residues 449–468 (PPRF…YRED) and 510–547 (VSNK…HEPK). Residues 519 to 529 (TSSSSDPQSLE) show a composition bias toward polar residues.

This sequence belongs to the major facilitator superfamily. Sugar transporter (TC 2.A.1.1) family.

The protein resides in the membrane. This Leishmania donovani protein is Membrane transporter D1.